The sequence spans 505 residues: Histidine ammonia-lyase (505 aa).

A cross-link (5-imidazolinone (Ala-Gly)) is located at residues 141-143; the sequence is ASG. The residue at position 142 (S142) is a 2,3-didehydroalanine (Ser).

It belongs to the PAL/histidase family. In terms of processing, contains an active site 4-methylidene-imidazol-5-one (MIO), which is formed autocatalytically by cyclization and dehydration of residues Ala-Ser-Gly.

Its subcellular location is the cytoplasm. It catalyses the reaction L-histidine = trans-urocanate + NH4(+). Its pathway is amino-acid degradation; L-histidine degradation into L-glutamate; N-formimidoyl-L-glutamate from L-histidine: step 1/3. In Bacillus cytotoxicus (strain DSM 22905 / CIP 110041 / 391-98 / NVH 391-98), this protein is Histidine ammonia-lyase.